Reading from the N-terminus, the 1461-residue chain is Selection and upkeep of intraepithelial T-cells protein 5 (1461 aa).

The first 24 residues, M1–S24, serve as a signal peptide directing secretion. At S25 to K1306 the chain is on the extracellular side. In terms of domain architecture, Ig-like V-type spans E26–K139. 2 disulfides stabilise this stretch: C49/C123 and C163/C217. In terms of domain architecture, Ig-like C1-type spans A142 to S231. Residue N200 is glycosylated (N-linked (GlcNAc...) asparagine). A helical membrane pass occupies residues Y1307 to L1327. Residues K1328–D1345 lie on the Cytoplasmic side of the membrane. Residues T1346–F1366 form a helical membrane-spanning segment. Over R1367–R1387 the chain is Extracellular. A helical transmembrane segment spans residues F1388–I1408. The Cytoplasmic portion of the chain corresponds to Q1409 to M1427. A helical membrane pass occupies residues V1428–F1448. Over D1449–G1461 the chain is Extracellular.

This sequence belongs to the SKINT family. Expressed in skin and, to a lower extent, testis.

It is found in the membrane. Functionally, may act by engaging a cell surface molecule on immature T-cells in the embryonic thymus. The sequence is that of Selection and upkeep of intraepithelial T-cells protein 5 (Skint5) from Mus musculus (Mouse).